We begin with the raw amino-acid sequence, 654 residues long: MRLYCLSGDLAKPCYIITFKGLRIMLDCGLTEQTVLNFLPLPFVQSLKWSNLPNFVPSRDHDPQMDGELKDCCGRVFVDSTPEFNLPMDKMLDFSEVDVILISNYLNMLALPYITENTGFKGKVYATEPTLQIGRFFLEELVDYIEVSPKACTARLWKEKLHLLPSPLSEAFRAKKWRTIFSLKDVQGSLSKVTIMGYDEKLDILGAFIATPVSSGYCLGSSNWVLSTAHEKICYVSGSSTLTTHPRPINQSALKHADVLIMTGLTQAPTVNPDTKLGELCMNVALTIRNNGSALIPCYPSGVVYDLFECLTQNLENAGLNNVPMFFISPVADSSLAYSNILAEWLSSAKQNKVYLPDDPFPHAFYLRNNKLKHYNHVFSEGFSKDFRQPCVVFCGHPSLRFGDAVHFIEMWGNNPNNSIIFTEPDFPYLQVLAPFQPLAMKAFYCPIDTSLNYQQANKLIKELKPNVLVIPEAYTKPHPSAPNLFIEQPDKKIITFKCGEIIRLPLKRKLDRIYITSELAQKISPKEVAAGVTFSTLTGVLQVKDKVHCIQPCADSVKDETISSNSAPTKEDVLKNVKYEYGSIDVDAVMKKLAQDGFSNIKLDRTGGALTLNLVNEDTVIKFEDNETHIICGGKPTTRLKLRDTIMKCLQSF.

The 1D-myo-inositol hexakisphosphate site is built by Met1, Arg2, Thr18, Phe19, Arg504, Lys508, and Arg509.

This sequence belongs to the metallo-beta-lactamase superfamily. RNA-metabolizing metallo-beta-lactamase-like family. INTS9 subfamily. As to quaternary structure, belongs to the multiprotein complex Integrator, at least composed of IntS1, IntS2, IntS3, IntS4, omd/IntS5, IntS6, defl/IntS7, IntS8, IntS9, IntS10, IntS11, IntS12, asun/IntS13, IntS14 and IntS15. The core complex associates with protein phosphatase 2A subunits mts/PP2A and Pp2A-29B, to form the Integrator-PP2A (INTAC) complex. Within the complex, interacts with IntS1 and IntS12. IntS9 is part of the RNA endonuclease subcomplex, composed of IntS4, IntS9, IntS11 and inositol hexakisphosphate (InsP6).

Its subcellular location is the nucleus. It localises to the cytoplasm. It is found in the cytosol. Component of the integrator complex, a multiprotein complex that terminates RNA polymerase II (Pol II) transcription in the promoter-proximal region of genes. The integrator complex provides a quality checkpoint during transcription elongation by driving premature transcription termination of transcripts that are unfavorably configured for transcriptional elongation: the complex terminates transcription by (1) catalyzing dephosphorylation of the C-terminal domain (CTD) of Pol II subunit Polr2A/Rbp1 and Spt5, and (2) degrading the exiting nascent RNA transcript via endonuclease activity. The integrator complex is also involved in the 3'-end processing of the U7 snRNA, and also the spliceosomal snRNAs U1, U2, U4 and U5. This Drosophila melanogaster (Fruit fly) protein is Integrator complex subunit 9.